A 962-amino-acid chain; its full sequence is Exportin-T (962 aa).

At Met1 the chain carries N-acetylmethionine. The interval 1–385 (MDEQALLGLN…MLAVMKKLTY (385 aa)) is necessary for interaction with Ran, nuclear localization and nuclear import. Positions 443–962 (FMEVEVAIRL…LKVFFQRAKP (520 aa)) are necessary for tRNA-binding, cytoplasmic localization and nuclear export. An N6-acetyllysine modification is found at Lys634.

Belongs to the exportin family. In terms of assembly, found in a complex with XPOT, Ran and tRNA. Probably found in a complex with nucleoporins. Interacts with Ran and tRNA in a GTP-dependent manner.

It localises to the nucleus. The protein localises to the cytoplasm. Mediates the nuclear export of aminoacylated tRNAs. In the nucleus binds to tRNA and to the GTPase Ran in its active GTP-bound form. Docking of this trimeric complex to the nuclear pore complex (NPC) is mediated through binding to nucleoporins. Upon transit of a nuclear export complex into the cytoplasm, disassembling of the complex and hydrolysis of Ran-GTP to Ran-GDP (induced by RANBP1 and RANGAP1, respectively) cause release of the tRNA from the export receptor. XPOT then return to the nuclear compartment and mediate another round of transport. The directionality of nuclear export is thought to be conferred by an asymmetric distribution of the GTP- and GDP-bound forms of Ran between the cytoplasm and nucleus. The sequence is that of Exportin-T (XPOT) from Homo sapiens (Human).